We begin with the raw amino-acid sequence, 514 residues long: Probable lipid II flippase MurJ (514 aa).

The next 14 membrane-spanning stretches (helical) occupy residues 3–23 (ILKS…FGFF), 25–45 (DVLI…FIAF), 92–112 (ILVL…IIFI), 130–150 (LLKI…CSSI), 157–177 (FFIP…FSFF), 186–206 (IISL…YQFP), 245–265 (ISLI…ISWI), 271–291 (LIEF…FTSF), 315–335 (LILS…LVII), 354–374 (LELY…VSAF), 386–406 (ISIL…FYFQ), 409–429 (GLAL…YWKL), 448–468 (LLIA…FIPS), and 481–501 (LFTI…FLGI).

This sequence belongs to the MurJ/MviN family.

Its subcellular location is the cell inner membrane. It functions in the pathway cell wall biogenesis; peptidoglycan biosynthesis. Its function is as follows. Involved in peptidoglycan biosynthesis. Transports lipid-linked peptidoglycan precursors from the inner to the outer leaflet of the cytoplasmic membrane. The protein is Probable lipid II flippase MurJ of Buchnera aphidicola subsp. Schizaphis graminum (strain Sg).